We begin with the raw amino-acid sequence, 110 residues long: Urease subunit beta (110 aa).

This sequence belongs to the urease beta subunit family. As to quaternary structure, heterotrimer of UreA (gamma), UreB (beta) and UreC (alpha) subunits. Three heterotrimers associate to form the active enzyme.

The protein localises to the cytoplasm. The enzyme catalyses urea + 2 H2O + H(+) = hydrogencarbonate + 2 NH4(+). It functions in the pathway nitrogen metabolism; urea degradation; CO(2) and NH(3) from urea (urease route): step 1/1. The protein is Urease subunit beta of Pseudoalteromonas translucida (strain TAC 125).